The following is a 96-amino-acid chain: UPF0358 protein Aflv_1873 (96 aa).

It belongs to the UPF0358 family.

The polypeptide is UPF0358 protein Aflv_1873 (Anoxybacillus flavithermus (strain DSM 21510 / WK1)).